The primary structure comprises 194 residues: MLSSPLRVAVVCVSNVNRSMEAHSILRRKGLSVRSFGTESHVRLPGPRPNRPVVYDFATTYKQMYNDLLRKDRERYTRNGILHILGRNERIKPGPERFQECTDSFDVIFTCEESVYDTVVEDLCSREQQTFQPVHVINMDIQDTLEDATLGAFLICEICQCLQQSDDIEDNLEELLLQMEEKAGKSFLHTVCFY.

The protein belongs to the SSU72 phosphatase family.

It is found in the nucleus. The catalysed reaction is O-phospho-L-seryl-[protein] + H2O = L-seryl-[protein] + phosphate. It catalyses the reaction O-phospho-L-threonyl-[protein] + H2O = L-threonyl-[protein] + phosphate. In terms of biological role, protein phosphatase that catalyzes the dephosphorylation of the C-terminal domain of RNA polymerase II. Plays a role in RNA processing and termination. The polypeptide is RNA polymerase II subunit A C-terminal domain phosphatase SSU72 like protein 3 (Homo sapiens (Human)).